Here is a 448-residue protein sequence, read N- to C-terminus: Glutamyl-tRNA reductase (448 aa).

Substrate is bound by residues 49-52, S109, 114-116, and Q120; these read TCNR and ETQ. The Nucleophile role is filled by C50. 189-194 lines the NADP(+) pocket; it reads GAGEMS.

It belongs to the glutamyl-tRNA reductase family. In terms of assembly, homodimer.

It catalyses the reaction (S)-4-amino-5-oxopentanoate + tRNA(Glu) + NADP(+) = L-glutamyl-tRNA(Glu) + NADPH + H(+). The protein operates within porphyrin-containing compound metabolism; protoporphyrin-IX biosynthesis; 5-aminolevulinate from L-glutamyl-tRNA(Glu): step 1/2. Functionally, catalyzes the NADPH-dependent reduction of glutamyl-tRNA(Glu) to glutamate 1-semialdehyde (GSA). This Staphylococcus aureus (strain NCTC 8325 / PS 47) protein is Glutamyl-tRNA reductase.